An 80-amino-acid chain; its full sequence is Small ribosomal subunit protein bS18c (80 aa).

Over residues methionine 1–proline 19 the composition is skewed to basic residues. Positions methionine 1–glutamate 24 are disordered.

The protein belongs to the bacterial ribosomal protein bS18 family. As to quaternary structure, part of the 30S ribosomal subunit.

The protein localises to the plastid. It is found in the chloroplast. This Staurastrum punctulatum (Green alga) protein is Small ribosomal subunit protein bS18c.